The sequence spans 122 residues: Large ribosomal subunit protein uL14 (122 aa).

Belongs to the universal ribosomal protein uL14 family. As to quaternary structure, part of the 50S ribosomal subunit. Forms a cluster with proteins L3 and L19. In the 70S ribosome, L14 and L19 interact and together make contacts with the 16S rRNA in bridges B5 and B8.

Functionally, binds to 23S rRNA. Forms part of two intersubunit bridges in the 70S ribosome. This chain is Large ribosomal subunit protein uL14, found in Malacoplasma penetrans (strain HF-2) (Mycoplasma penetrans).